A 48-amino-acid chain; its full sequence is Single-stranded DNA-binding protein (48 aa).

In terms of assembly, homodimer in the absence of DNA, monomer when binding DNA.

Its function is as follows. Binds preferentially to single-stranded DNA and therefore, destabilizes double-stranded DNA. It is involved in DNA replication, repair and recombination. Binds ss-DNA as the replication fork advances and stimulates the replisome processivity and accuracy. The polypeptide is Single-stranded DNA-binding protein (32) (Enterobacteria phage FSalpha (Bacteriophage FS-alpha)).